We begin with the raw amino-acid sequence, 55 residues long: UPF0391 membrane protein RSp1666 (55 aa).

A run of 2 helical transmembrane segments spans residues 5–25 (AVIF…GIAA) and 33–53 (ILFM…LVAG).

This sequence belongs to the UPF0391 family.

The protein resides in the cell membrane. The sequence is that of UPF0391 membrane protein RSp1666 from Ralstonia nicotianae (strain ATCC BAA-1114 / GMI1000) (Ralstonia solanacearum).